Consider the following 98-residue polypeptide: Integration host factor subunit alpha (98 aa).

Residues 52–71 (FDLRDKNQRPGRNPKTGEDI) are disordered.

The protein belongs to the bacterial histone-like protein family. Heterodimer of an alpha and a beta chain.

Its function is as follows. This protein is one of the two subunits of integration host factor, a specific DNA-binding protein that functions in genetic recombination as well as in transcriptional and translational control. The polypeptide is Integration host factor subunit alpha (Photorhabdus laumondii subsp. laumondii (strain DSM 15139 / CIP 105565 / TT01) (Photorhabdus luminescens subsp. laumondii)).